An 805-amino-acid chain; its full sequence is Leucine--tRNA ligase (805 aa).

The short motif at 40 to 51 (PYPSGSGLHVGH) is the 'HIGH' region element. The 'KMSKS' region signature appears at 576 to 580 (KMSKS). Lys-579 is a binding site for ATP.

It belongs to the class-I aminoacyl-tRNA synthetase family.

It localises to the cytoplasm. The enzyme catalyses tRNA(Leu) + L-leucine + ATP = L-leucyl-tRNA(Leu) + AMP + diphosphate. The chain is Leucine--tRNA ligase from Chloroherpeton thalassium (strain ATCC 35110 / GB-78).